We begin with the raw amino-acid sequence, 133 residues long: Small ribosomal subunit protein uS8 (133 aa).

This sequence belongs to the universal ribosomal protein uS8 family. In terms of assembly, part of the 30S ribosomal subunit. Contacts proteins S5 and S12.

One of the primary rRNA binding proteins, it binds directly to 16S rRNA central domain where it helps coordinate assembly of the platform of the 30S subunit. The chain is Small ribosomal subunit protein uS8 from Deinococcus radiodurans (strain ATCC 13939 / DSM 20539 / JCM 16871 / CCUG 27074 / LMG 4051 / NBRC 15346 / NCIMB 9279 / VKM B-1422 / R1).